The following is a 117-amino-acid chain: MDTLSQMLTKIRNAQMARHRWVLVPASRMNWNVAQVLREEGLIAQVQPADLHLRIQLKPKRIQRIWRVSKPGLRIYSSYKNMPKVLGMLIISTSKGVMTHQKAKQMQVGGEILCGVY.

The protein belongs to the universal ribosomal protein uS8 family. In terms of assembly, part of the 30S ribosomal subunit.

Its subcellular location is the plastid. It localises to the chloroplast. In terms of biological role, one of the primary rRNA binding proteins, it binds directly to 16S rRNA central domain where it helps coordinate assembly of the platform of the 30S subunit. This Cyanidioschyzon merolae (strain NIES-3377 / 10D) (Unicellular red alga) protein is Small ribosomal subunit protein uS8c (rps8).